We begin with the raw amino-acid sequence, 908 residues long: NADH-quinone oxidoreductase subunit G (908 aa).

A 2Fe-2S ferredoxin-type domain is found at 2–83 (ATIHVDGKEY…GTFISIDDEE (82 aa)). 4 residues coordinate [2Fe-2S] cluster: Cys34, Cys45, Cys48, and Cys67. The 4Fe-4S His(Cys)3-ligated-type domain occupies 83 to 122 (EAKQFRESVVEWLMTNHPHDCPVCEEGGNCHLQDMTVMTG). The [4Fe-4S] cluster site is built by His99, Cys103, Cys106, Cys112, Cys151, Cys154, Cys157, Cys201, Cys228, Cys231, Cys235, and Cys263. One can recognise a 4Fe-4S Mo/W bis-MGD-type domain in the interval 221-277 (MQFAPSICQQCSIGCNISPGERYGELRRIENRYNGTVNHYFLCDRGRFGYGYVNLKD).

Belongs to the complex I 75 kDa subunit family. Composed of 13 different subunits. Subunits NuoCD, E, F, and G constitute the peripheral sector of the complex. It depends on [2Fe-2S] cluster as a cofactor. [4Fe-4S] cluster serves as cofactor.

It carries out the reaction a quinone + NADH + 5 H(+)(in) = a quinol + NAD(+) + 4 H(+)(out). Its function is as follows. NDH-1 shuttles electrons from NADH, via FMN and iron-sulfur (Fe-S) centers, to quinones in the respiratory chain. The immediate electron acceptor for the enzyme in this species is believed to be ubiquinone. Couples the redox reaction to proton translocation (for every two electrons transferred, four hydrogen ions are translocated across the cytoplasmic membrane), and thus conserves the redox energy in a proton gradient. In Salmonella typhi, this protein is NADH-quinone oxidoreductase subunit G (nuoG).